Consider the following 410-residue polypeptide: Dihydrolipoyllysine-residue succinyltransferase component of 2-oxoglutarate dehydrogenase complex (410 aa).

The region spanning 3–81 (IINIFIPDLP…QVIGTLLKIG (79 aa)) is the Lipoyl-binding domain. Lys44 bears the N6-lipoyllysine mark. The 39-residue stretch at 112 to 150 (TYSPTVRRLISMHDLRDVDIIQGTGTKNRLTRKDILNYL) folds into the Peripheral subunit-binding (PSBD) domain. Catalysis depends on residues His381 and Asp385.

It belongs to the 2-oxoacid dehydrogenase family. As to quaternary structure, forms a 24-polypeptide structural core with octahedral symmetry. Part of the 2-oxoglutarate dehydrogenase (OGDH) complex composed of E1 (2-oxoglutarate dehydrogenase), E2 (dihydrolipoamide succinyltransferase) and E3 (dihydrolipoamide dehydrogenase); the complex contains multiple copies of the three enzymatic components (E1, E2 and E3). It depends on (R)-lipoate as a cofactor.

The catalysed reaction is N(6)-[(R)-dihydrolipoyl]-L-lysyl-[protein] + succinyl-CoA = N(6)-[(R)-S(8)-succinyldihydrolipoyl]-L-lysyl-[protein] + CoA. Its pathway is amino-acid degradation; L-lysine degradation via saccharopine pathway; glutaryl-CoA from L-lysine: step 6/6. In terms of biological role, E2 component of the 2-oxoglutarate dehydrogenase (OGDH) complex which catalyzes the second step in the conversion of 2-oxoglutarate to succinyl-CoA and CO(2). The sequence is that of Dihydrolipoyllysine-residue succinyltransferase component of 2-oxoglutarate dehydrogenase complex (sucB) from Buchnera aphidicola subsp. Baizongia pistaciae (strain Bp).